The following is a 140-amino-acid chain: Protein ARABIDOPSIS THALIANA ANTHER 7 (140 aa).

The first 20 residues, 1–20, serve as a signal peptide directing secretion; that stretch reads MKIHAILVVAFLVLMKTAVS. 4 disulfide bridges follow: Cys-29–Cys-87, Cys-39–Cys-54, Cys-55–Cys-111, and Cys-85–Cys-125.

It belongs to the plant LTP family. As to expression, tapetum-specific. Also present in pollen.

The protein localises to the endoplasmic reticulum lumen. The protein is Protein ARABIDOPSIS THALIANA ANTHER 7 of Arabidopsis thaliana (Mouse-ear cress).